A 919-amino-acid polypeptide reads, in one-letter code: Motility hub protein FimV (919 aa).

The signal sequence occupies residues 1 to 24 (MVRLRTLVRAIAAASVLTSGMAHG). A compositionally biased stretch (low complexity) spans 140-171 (ASAPQAPVSAPRATGAPRAPQAPAPVRTTAPA). 2 disordered regions span residues 140-177 (ASAP…DTYR) and 237-312 (ERSP…KGDS). Residues 174 to 229 (DTYRTVSNDTLWEIAQRNRTDRVSVPQAMLAFQELNPGAFVDGNINRLKSGQVLRI) enclose the LysM domain. Residues 245–256 (SQVQAQNQSWRG) show a composition bias toward polar residues. A compositionally biased stretch (basic and acidic residues) spans 299 to 312 (KASKGADKGGKGDS). Positions 319–367 (LAVTKESLDSTRRENEELQSRMQDLQSQLDKLQKLIQLKDAQLAKLQGQ) form a coiled coil. The disordered stretch occupies residues 372 to 445 (GQGAAQPNAA…APAVPAPAPV (74 aa)). A compositionally biased stretch (low complexity) spans 390 to 417 (AAAQAPAQPGTPAAAAPTPAPAGEAPAA). A compositionally biased stretch (pro residues) spans 418-443 (PAQPPVAPPPAPAAEKPPAPAVPAPA). Residues 464–484 (LWLAVIGGSALLALLVLLMIL) traverse the membrane as a helical segment. Positions 785-816 (AEEPALSLPDDFDLSLADEPTEPAAPEKGEDS) are disordered.

In terms of assembly, interacts with FimL. Interacts with DgcP.

It is found in the cell inner membrane. Its function is as follows. Inner membrane hub protein that plays both cAMP-dependent and cAMP-independent roles in twitching motility. Regulates intracellular cyclic AMP (cAMP) levels through the activation of adenylate cyclase CyaB. Plays an essential role in a number of virulence mechanisms including type IV pilus (T4P)-mediated assembly and twitching motility as well as cAMP-dependent virulence gene expression. Also mediates type II secretion (T2S) of lipases and proteases. In addition, mediates the cAMP-independent localization of multiple T4P structural and regulatory components to the cell poles. This role in directing proteins to the cell pole is not restricted to type IV component and involves other proteins such as the diguanylate cyclase DgcP. The polypeptide is Motility hub protein FimV (fimV) (Pseudomonas aeruginosa (strain ATCC 15692 / DSM 22644 / CIP 104116 / JCM 14847 / LMG 12228 / 1C / PRS 101 / PAO1)).